The primary structure comprises 790 residues: Nuclear cap-binding protein subunit 1 (790 aa).

Positions 1 to 26 (MSRRRHSYENDGGQPHKRRKTSDANE) are disordered. The Nuclear localization signal motif lies at 3–20 (RRRHSYENDGGQPHKRRK). At Ser-7 the chain carries Phosphoserine. Thr-21 is modified (phosphothreonine). 2 positions are modified to phosphoserine: Ser-22 and Ser-201. The region spanning 28–240 (EDHLESLICK…CLWAQIQKLK (213 aa)) is the MIF4G domain. At Lys-204 the chain carries N6-acetyllysine. Residues 643 to 713 (STIRKMNKHV…SEQKNLFLVI (71 aa)) adopt a coiled-coil conformation. Lys-684 is covalently cross-linked (Glycyl lysine isopeptide (Lys-Gly) (interchain with G-Cter in SUMO2)). N6-acetyllysine is present on Lys-698.

The protein belongs to the NCBP1 family. As to quaternary structure, component of the nuclear cap-binding complex (CBC), a heterodimer composed of NCBP1/CBP80 and NCBP2/CBP20 that interacts with m7GpppG-capped RNA. Found in a U snRNA export complex containing PHAX/RNUXA, NCBP1/CBP80, NCBP2/CBP20, RAN, XPO1 and m7G-capped RNA. Identified in a IGF2BP1-dependent mRNP granule complex containing untranslated mRNAs. Interacts with PHAX/RNUXA, SRRT/ARS2, EIF4G2, IGF2BP1, HNRNPF, HNRNPH1, KIAA0427/CTIF, PARN, DROSHA, UPF1 and ALYREF/THOC4. May interact with EIF4G1; the interaction is however controversial since it is reported by, and, but is not observed by. The large PER complex involved in the repression of transcriptional termination is composed of at least PER2, CDK9, DDX5, DHX9, NCBP1/CBP80 and POLR2A. Component of an alternative nuclear cap-binding complex (CBC) composed of NCBP1/CBP80 and NCBP3. Interacts with METTL3. Interacts with ZFC3H1 in a RNase-insensitive manner. Interacts with MTREX. Interacts with TASOR. Interacts with DHX34; the interaction is RNA-dependent. Interacts with KPNA3. In terms of processing, dephosphorylated at Thr-21 by the PNUTS-PP1 complex during RNA polymerase II transcription pause-release.

The protein localises to the nucleus. Its subcellular location is the cytoplasm. Its function is as follows. Component of the cap-binding complex (CBC), which binds cotranscriptionally to the 5'-cap of pre-mRNAs and is involved in various processes such as pre-mRNA splicing, translation regulation, nonsense-mediated mRNA decay, RNA-mediated gene silencing (RNAi) by microRNAs (miRNAs) and mRNA export. The CBC complex is involved in mRNA export from the nucleus via its interaction with ALYREF/THOC4/ALY, leading to the recruitment of the mRNA export machinery to the 5'-end of mRNA and to mRNA export in a 5' to 3' direction through the nuclear pore. The CBC complex is also involved in mediating U snRNA and intronless mRNAs export from the nucleus. The CBC complex is essential for a pioneer round of mRNA translation, before steady state translation when the CBC complex is replaced by cytoplasmic cap-binding protein eIF4E. The pioneer round of mRNA translation mediated by the CBC complex plays a central role in nonsense-mediated mRNA decay (NMD), NMD only taking place in mRNAs bound to the CBC complex, but not on eIF4E-bound mRNAs. The CBC complex enhances NMD in mRNAs containing at least one exon-junction complex (EJC) via its interaction with UPF1, promoting the interaction between UPF1 and UPF2. The CBC complex is also involved in 'failsafe' NMD, which is independent of the EJC complex, while it does not participate in Staufen-mediated mRNA decay (SMD). During cell proliferation, the CBC complex is also involved in microRNAs (miRNAs) biogenesis via its interaction with SRRT/ARS2 and is required for miRNA-mediated RNA interference. The CBC complex also acts as a negative regulator of PARN, thereby acting as an inhibitor of mRNA deadenylation. In the CBC complex, NCBP1/CBP80 does not bind directly capped RNAs (m7GpppG-capped RNA) but is required to stabilize the movement of the N-terminal loop of NCBP2/CBP20 and lock the CBC into a high affinity cap-binding state with the cap structure. Associates with NCBP3 to form an alternative cap-binding complex (CBC) which plays a key role in mRNA export and is particularly important in cellular stress situations such as virus infections. The conventional CBC with NCBP2 binds both small nuclear RNA (snRNA) and messenger (mRNA) and is involved in their export from the nucleus whereas the alternative CBC with NCBP3 does not bind snRNA and associates only with mRNA thereby playing a role only in mRNA export. NCBP1/CBP80 is required for cell growth and viability. In Rattus norvegicus (Rat), this protein is Nuclear cap-binding protein subunit 1 (Ncbp1).